The primary structure comprises 342 residues: Endo-1,4-beta-xylanase A (342 aa).

Residues glutamate 11–phenylalanine 342 form the GH10 domain. Glutamate 144 (proton donor) is an active-site residue. Glutamate 252 functions as the Nucleophile in the catalytic mechanism.

The protein belongs to the glycosyl hydrolase 10 (cellulase F) family. Cytoplasmic xylanase subfamily.

It localises to the cytoplasm. The enzyme catalyses Endohydrolysis of (1-&gt;4)-beta-D-xylosidic linkages in xylans.. It participates in glycan degradation; xylan degradation. This Caldicellulosiruptor saccharolyticus (Caldocellum saccharolyticum) protein is Endo-1,4-beta-xylanase A (xynA).